A 202-amino-acid polypeptide reads, in one-letter code: Protein Thf1 (202 aa).

Residues 174–202 (IYKSSILKMEQAKELLQEAKIKDKKEKKK) are a coiled coil.

This sequence belongs to the THF1 family.

Functionally, may be involved in photosynthetic membrane biogenesis. The chain is Protein Thf1 from Prochlorococcus marinus subsp. pastoris (strain CCMP1986 / NIES-2087 / MED4).